Reading from the N-terminus, the 156-residue chain is ATP synthase subunit b 2 (156 aa).

Residues 11–31 traverse the membrane as a helical segment; it reads LLAFIFFVWFCMKFVWPPIMG.

This sequence belongs to the ATPase B chain family. As to quaternary structure, F-type ATPases have 2 components, F(1) - the catalytic core - and F(0) - the membrane proton channel. F(1) has five subunits: alpha(3), beta(3), gamma(1), delta(1), epsilon(1). F(0) has three main subunits: a(1), b(2) and c(10-14). The alpha and beta chains form an alternating ring which encloses part of the gamma chain. F(1) is attached to F(0) by a central stalk formed by the gamma and epsilon chains, while a peripheral stalk is formed by the delta and b chains.

The protein resides in the cell inner membrane. Functionally, f(1)F(0) ATP synthase produces ATP from ADP in the presence of a proton or sodium gradient. F-type ATPases consist of two structural domains, F(1) containing the extramembraneous catalytic core and F(0) containing the membrane proton channel, linked together by a central stalk and a peripheral stalk. During catalysis, ATP synthesis in the catalytic domain of F(1) is coupled via a rotary mechanism of the central stalk subunits to proton translocation. Its function is as follows. Component of the F(0) channel, it forms part of the peripheral stalk, linking F(1) to F(0). In Pseudoalteromonas atlantica (strain T6c / ATCC BAA-1087), this protein is ATP synthase subunit b 2.